The following is a 559-amino-acid chain: Asparagine--tRNA ligase, cytoplasmic (559 aa).

Ser-72 bears the Phosphoserine mark. The interval 82–102 is disordered; sequence HREQMKNDSREKKEAEDNLRR. An N6-acetyllysine modification is found at Lys-255. Ser-493 carries the post-translational modification Phosphoserine. An N6-acetyllysine modification is found at Lys-501.

This sequence belongs to the class-II aminoacyl-tRNA synthetase family. As to quaternary structure, homodimer.

The protein localises to the cytoplasm. It carries out the reaction tRNA(Asn) + L-asparagine + ATP = L-asparaginyl-tRNA(Asn) + AMP + diphosphate + H(+). Catalyzes the attachment of asparagine to tRNA(Asn) in a two-step reaction: asparagine is first activated by ATP to form Asn-AMP and then transferred to the acceptor end of tRNA(Asn). In addition to its essential role in protein synthesis, acts as a signaling molecule that induced migration of CCR3-expressing cells. Has an essential role in the development of the cerebral cortex, being required for proper proliferation of radial glial cells. This Mus musculus (Mouse) protein is Asparagine--tRNA ligase, cytoplasmic.